Consider the following 562-residue polypeptide: NAD-dependent malic enzyme (562 aa).

The active-site Proton donor is tyrosine 101. Arginine 154 contributes to the NAD(+) binding site. Lysine 172 acts as the Proton acceptor in catalysis. Residues glutamate 243, aspartate 244, and aspartate 267 each contribute to the a divalent metal cation site. NAD(+) contacts are provided by aspartate 267 and asparagine 415.

This sequence belongs to the malic enzymes family. In terms of assembly, homotetramer. Mg(2+) is required as a cofactor. Requires Mn(2+) as cofactor.

The catalysed reaction is (S)-malate + NAD(+) = pyruvate + CO2 + NADH. It catalyses the reaction oxaloacetate + H(+) = pyruvate + CO2. The protein is NAD-dependent malic enzyme of Colwellia psychrerythraea (strain 34H / ATCC BAA-681) (Vibrio psychroerythus).